Reading from the N-terminus, the 242-residue chain is Probable 2-phosphosulfolactate phosphatase (242 aa).

The protein belongs to the ComB family. Mg(2+) is required as a cofactor.

It carries out the reaction (2R)-O-phospho-3-sulfolactate + H2O = (2R)-3-sulfolactate + phosphate. The polypeptide is Probable 2-phosphosulfolactate phosphatase (Caldicellulosiruptor saccharolyticus (strain ATCC 43494 / DSM 8903 / Tp8T 6331)).